We begin with the raw amino-acid sequence, 533 residues long: Putative phosphate permease HP_1491 (533 aa).

Helical transmembrane passes span 23 to 43 (IALA…FGQA), 47 to 67 (GLLL…IGAN), 81 to 101 (AISM…GAII), 129 to 149 (VMLA…LIGA), 156 to 176 (SVVG…AVNW), 182 to 202 (IVAS…FFLM), 221 to 241 (VVPY…IVKV), 248 to 268 (LNFE…FILF), 286 to 306 (INEL…FAHG), 338 to 358 (VPLW…SLYG), 372 to 392 (LDKM…LLAS), and 509 to 529 (LVTV…LGFI).

It belongs to the inorganic phosphate transporter (PiT) (TC 2.A.20) family.

Its subcellular location is the cell membrane. Its function is as follows. Potential transporter for phosphate. This is Putative phosphate permease HP_1491 from Helicobacter pylori (strain ATCC 700392 / 26695) (Campylobacter pylori).